Here is a 310-residue protein sequence, read N- to C-terminus: 4-hydroxythreonine-4-phosphate dehydrogenase (310 aa).

Threonine 129 serves as a coordination point for substrate. The a divalent metal cation site is built by histidine 158, histidine 202, and histidine 250. Substrate-binding residues include lysine 258, asparagine 267, and arginine 276.

Belongs to the PdxA family. As to quaternary structure, homodimer. Requires a divalent metal cation as cofactor.

It localises to the cytoplasm. The catalysed reaction is 4-(phosphooxy)-L-threonine + NAD(+) = 3-amino-2-oxopropyl phosphate + CO2 + NADH. Its pathway is cofactor biosynthesis; pyridoxine 5'-phosphate biosynthesis; pyridoxine 5'-phosphate from D-erythrose 4-phosphate: step 4/5. Catalyzes the NAD(P)-dependent oxidation of 4-(phosphooxy)-L-threonine (HTP) into 2-amino-3-oxo-4-(phosphooxy)butyric acid which spontaneously decarboxylates to form 3-amino-2-oxopropyl phosphate (AHAP). The polypeptide is 4-hydroxythreonine-4-phosphate dehydrogenase (Hydrogenobaculum sp. (strain Y04AAS1)).